We begin with the raw amino-acid sequence, 354 residues long: Uroporphyrinogen decarboxylase (354 aa).

Substrate contacts are provided by residues 25–29 (RQAGR), F44, D75, Y152, T207, and H330.

Belongs to the uroporphyrinogen decarboxylase family. As to quaternary structure, homodimer.

It localises to the cytoplasm. It carries out the reaction uroporphyrinogen III + 4 H(+) = coproporphyrinogen III + 4 CO2. The protein operates within porphyrin-containing compound metabolism; protoporphyrin-IX biosynthesis; coproporphyrinogen-III from 5-aminolevulinate: step 4/4. Catalyzes the decarboxylation of four acetate groups of uroporphyrinogen-III to yield coproporphyrinogen-III. The sequence is that of Uroporphyrinogen decarboxylase from Xylella fastidiosa (strain Temecula1 / ATCC 700964).